Here is a 565-residue protein sequence, read N- to C-terminus: Dihydroxy-acid dehydratase (565 aa).

Cys-50 provides a ligand contact to [2Fe-2S] cluster. Residue Asp-82 participates in Mg(2+) binding. Position 123 (Cys-123) interacts with [2Fe-2S] cluster. Mg(2+) is bound by residues Asp-124 and Lys-125. Lys-125 carries the post-translational modification N6-carboxylysine. [2Fe-2S] cluster is bound at residue Cys-195. Glu-447 is a binding site for Mg(2+). The active-site Proton acceptor is the Ser-473.

It belongs to the IlvD/Edd family. In terms of assembly, homodimer. It depends on [2Fe-2S] cluster as a cofactor. Mg(2+) is required as a cofactor.

The enzyme catalyses (2R)-2,3-dihydroxy-3-methylbutanoate = 3-methyl-2-oxobutanoate + H2O. It carries out the reaction (2R,3R)-2,3-dihydroxy-3-methylpentanoate = (S)-3-methyl-2-oxopentanoate + H2O. The protein operates within amino-acid biosynthesis; L-isoleucine biosynthesis; L-isoleucine from 2-oxobutanoate: step 3/4. It participates in amino-acid biosynthesis; L-valine biosynthesis; L-valine from pyruvate: step 3/4. In terms of biological role, functions in the biosynthesis of branched-chain amino acids. Catalyzes the dehydration of (2R,3R)-2,3-dihydroxy-3-methylpentanoate (2,3-dihydroxy-3-methylvalerate) into 2-oxo-3-methylpentanoate (2-oxo-3-methylvalerate) and of (2R)-2,3-dihydroxy-3-methylbutanoate (2,3-dihydroxyisovalerate) into 2-oxo-3-methylbutanoate (2-oxoisovalerate), the penultimate precursor to L-isoleucine and L-valine, respectively. This is Dihydroxy-acid dehydratase from Halorhodospira halophila (strain DSM 244 / SL1) (Ectothiorhodospira halophila (strain DSM 244 / SL1)).